The chain runs to 448 residues: Exodeoxyribonuclease 7 large subunit (448 aa).

Belongs to the XseA family. Heterooligomer composed of large and small subunits.

It is found in the cytoplasm. The catalysed reaction is Exonucleolytic cleavage in either 5'- to 3'- or 3'- to 5'-direction to yield nucleoside 5'-phosphates.. Functionally, bidirectionally degrades single-stranded DNA into large acid-insoluble oligonucleotides, which are then degraded further into small acid-soluble oligonucleotides. The chain is Exodeoxyribonuclease 7 large subunit from Enterococcus faecalis (strain ATCC 700802 / V583).